The sequence spans 183 residues: MRSVITGVAGVGKTTVLDIVSKETGIKIVNYGTLMFDLAKKRGLVENRDQMRKLSRDIQIDLQKNAATEIGRMEDVIVDTHMSIKTPFGYLPGLPEWVLREINASAFIIIEADPELILRRRQNDPTRARDEDSVESIREHQEINRAFAAAYSIFSGATVKIITNEEGKPDKAAHDIIKVIAVD.

7-15 (GVAGVGKTT) is an ATP binding site.

This sequence belongs to the archaeal adenylate kinase family.

The protein resides in the cytoplasm. The catalysed reaction is AMP + ATP = 2 ADP. The sequence is that of Adenylate kinase (adkA) from Thermoplasma acidophilum (strain ATCC 25905 / DSM 1728 / JCM 9062 / NBRC 15155 / AMRC-C165).